The chain runs to 298 residues: uncharacterized protein (298 aa).

Its subcellular location is the cytoplasm. It is found in the nucleus. This is an uncharacterized protein from Schizosaccharomyces pombe (strain 972 / ATCC 24843) (Fission yeast).